The chain runs to 267 residues: Rhomboid-type serine protease 2 (267 aa).

The next 6 membrane-spanning stretches (helical) occupy residues 20 to 40 (LPLF…ASLQ), 67 to 87 (FPLI…LTPL), 99 to 119 (TSLA…YVLI), 126 to 146 (ANHG…MESI), 155 to 179 (FVIG…AALI), and 185 to 206 (LGHL…KLLA). Serine 134 functions as the Nucleophile in the catalytic mechanism. The active site involves histidine 187. The tract at residues 247-267 (RPGPSGSAATELVGTTQRLGP) is disordered.

The protein belongs to the peptidase S54 family.

It localises to the golgi apparatus membrane. The protein localises to the golgi apparatus. It is found in the cis-Golgi network membrane. It catalyses the reaction Cleaves type-1 transmembrane domains using a catalytic dyad composed of serine and histidine that are contributed by different transmembrane domains.. Probable rhomboid-type serine protease that catalyzes intramembrane proteolysis. The sequence is that of Rhomboid-type serine protease 2 (RBD2) from Gibberella zeae (strain ATCC MYA-4620 / CBS 123657 / FGSC 9075 / NRRL 31084 / PH-1) (Wheat head blight fungus).